The following is a 244-amino-acid chain: 1-(5-phosphoribosyl)-5-[(5-phosphoribosylamino)methylideneamino] imidazole-4-carboxamide isomerase (244 aa).

The Proton acceptor role is filled by Asp-10. The Proton donor role is filled by Asp-132.

It belongs to the HisA/HisF family.

The protein localises to the cytoplasm. The enzyme catalyses 1-(5-phospho-beta-D-ribosyl)-5-[(5-phospho-beta-D-ribosylamino)methylideneamino]imidazole-4-carboxamide = 5-[(5-phospho-1-deoxy-D-ribulos-1-ylimino)methylamino]-1-(5-phospho-beta-D-ribosyl)imidazole-4-carboxamide. It functions in the pathway amino-acid biosynthesis; L-histidine biosynthesis; L-histidine from 5-phospho-alpha-D-ribose 1-diphosphate: step 4/9. This is 1-(5-phosphoribosyl)-5-[(5-phosphoribosylamino)methylideneamino] imidazole-4-carboxamide isomerase from Stenotrophomonas maltophilia (strain K279a).